Consider the following 333-residue polypeptide: L-lactate dehydrogenase B chain (333 aa).

Residues 29–57 (GQVG…LEDK) and Arg-99 each bind NAD(+). Arg-106, Asn-138, and Arg-169 together coordinate substrate. Asn-138 is a binding site for NAD(+). Catalysis depends on His-193, which acts as the Proton acceptor. Thr-248 provides a ligand contact to substrate.

This sequence belongs to the LDH/MDH superfamily. LDH family. In terms of assembly, homotetramer.

It localises to the cytoplasm. The catalysed reaction is (S)-lactate + NAD(+) = pyruvate + NADH + H(+). Its pathway is fermentation; pyruvate fermentation to lactate; (S)-lactate from pyruvate: step 1/1. Interconverts simultaneously and stereospecifically pyruvate and lactate with concomitant interconversion of NADH and NAD(+). In Pelodiscus sinensis japonicus (Chinese soft-shelled turtle), this protein is L-lactate dehydrogenase B chain (LDHB).